The sequence spans 657 residues: ABC1 family protein YPL109C, mitochondrial (657 aa).

Residues 1–15 constitute a mitochondrion transit peptide; the sequence is MSFLKFAYRNSWRYY.

This sequence belongs to the protein kinase superfamily. ADCK protein kinase family.

The protein localises to the mitochondrion. The chain is ABC1 family protein YPL109C, mitochondrial from Saccharomyces cerevisiae (strain ATCC 204508 / S288c) (Baker's yeast).